We begin with the raw amino-acid sequence, 548 residues long: Peptide chain release factor 3 (548 aa).

In terms of domain architecture, tr-type G spans 23 to 290 (ERRRTFGIIS…ALLDWAPPPQ (268 aa)). Residues 32 to 39 (SHPDAGKT), 100 to 104 (DTPGH), and 154 to 157 (NKMD) contribute to the GTP site.

The protein belongs to the TRAFAC class translation factor GTPase superfamily. Classic translation factor GTPase family. PrfC subfamily.

Its subcellular location is the cytoplasm. Its function is as follows. Increases the formation of ribosomal termination complexes and stimulates activities of RF-1 and RF-2. It binds guanine nucleotides and has strong preference for UGA stop codons. It may interact directly with the ribosome. The stimulation of RF-1 and RF-2 is significantly reduced by GTP and GDP, but not by GMP. In Aromatoleum aromaticum (strain DSM 19018 / LMG 30748 / EbN1) (Azoarcus sp. (strain EbN1)), this protein is Peptide chain release factor 3.